Consider the following 391-residue polypeptide: Autotransporter heptosyltransferase Aah (391 aa).

Residues T101, L102, and G103 each coordinate ADP-D-glycero-beta-D-manno-heptose. The active-site Proton acceptor is D104. 7 residues coordinate ADP-D-glycero-beta-D-manno-heptose: Q218, T220, K224, R251, L275, G296, and E320. The Fe(3+) site is built by C333, C336, C352, and C364.

It belongs to the glycosyltransferase 9 family. As to quaternary structure, homododecamer composed of 6 homodimers forming a ring. Requires Fe(3+) as cofactor.

The protein resides in the cytoplasm. The catalysed reaction is ADP-D-glycero-beta-D-manno-heptose + L-seryl-[protein] = O-(D-glycero-alpha-D-manno-heptosyl)-L-seryl-[protein] + ADP + H(+). It catalyses the reaction ADP-L-glycero-beta-D-manno-heptose + L-seryl-[protein] = O-(L-glycero-alpha-D-manno-heptosyl)-L-seryl-[protein] + ADP + H(+). In terms of biological role, glycosylates autotransporter AIDA-I. Catalyzes the addition of both L, D-heptose and D, D-heptose sugars. Probably by glycosylating AIDA-I, involved in bacteria adhesion to host mammalian cells. The polypeptide is Autotransporter heptosyltransferase Aah (Escherichia coli).